The chain runs to 346 residues: Dihydroorotase (346 aa).

The Zn(2+) site is built by His13 and His15. Residues 15-17 (HLR) and Asn41 contribute to the substrate site. Zn(2+) contacts are provided by Lys99, His136, and His174. Lys99 is modified (N6-carboxylysine). His136 provides a ligand contact to substrate. Leu219 is a binding site for substrate. Asp247 contacts Zn(2+). The active site involves Asp247. Residues His251 and Ala263 each coordinate substrate.

The protein belongs to the metallo-dependent hydrolases superfamily. DHOase family. Class II DHOase subfamily. Homodimer. Zn(2+) serves as cofactor.

It carries out the reaction (S)-dihydroorotate + H2O = N-carbamoyl-L-aspartate + H(+). The protein operates within pyrimidine metabolism; UMP biosynthesis via de novo pathway; (S)-dihydroorotate from bicarbonate: step 3/3. In terms of biological role, catalyzes the reversible cyclization of carbamoyl aspartate to dihydroorotate. The protein is Dihydroorotase of Rhizobium leguminosarum bv. trifolii (strain WSM2304).